We begin with the raw amino-acid sequence, 158 residues long: Cyclic pyranopterin monophosphate synthase (158 aa).

Residues 75–77 and 113–114 contribute to the substrate site; these read LCH and ME. Asp128 is a catalytic residue.

It belongs to the MoaC family. As to quaternary structure, homohexamer; trimer of dimers.

The catalysed reaction is (8S)-3',8-cyclo-7,8-dihydroguanosine 5'-triphosphate = cyclic pyranopterin phosphate + diphosphate. It functions in the pathway cofactor biosynthesis; molybdopterin biosynthesis. Functionally, catalyzes the conversion of (8S)-3',8-cyclo-7,8-dihydroguanosine 5'-triphosphate to cyclic pyranopterin monophosphate (cPMP). This chain is Cyclic pyranopterin monophosphate synthase, found in Paraburkholderia xenovorans (strain LB400).